The following is a 461-amino-acid chain: Phosphatidate cytidylyltransferase 1 (461 aa).

Positions 1 to 68 are disordered; sequence MLELRHRGGC…PEVPPSSDRT (68 aa). Arginine 7 carries the omega-N-methylarginine modification. The span at 22–56 shows a compositional bias: basic and acidic residues; the sequence is REGEAAGGDHETESTSDKETDIDDRYGDLDARGDS. Residues serine 35 and serine 37 each carry the phosphoserine modification. 6 helical membrane-spanning segments follow: residues 96–116, 149–169, 183–203, 230–250, 279–299, and 357–377; these read MISL…LLVL, FLLC…FATF, HRFI…LSLV, LVIQ…SSVI, GFIG…YVLS, and IALS…ASGF.

It belongs to the CDS family. In terms of assembly, homodimer. Interacts with FOS; this interaction may enhance catalytic activity. Mg(2+) serves as cofactor. Expressed in adult brain, eye, smooth muscle and testis. Highly expressed in the inner segment of the photoreceptor layer of adult retina.

It is found in the endoplasmic reticulum membrane. The enzyme catalyses a 1,2-diacyl-sn-glycero-3-phosphate + CTP + H(+) = a CDP-1,2-diacyl-sn-glycerol + diphosphate. It carries out the reaction 1-octadecanoyl-2-(5Z,8Z,11Z,14Z-eicosatetraenoyl)-sn-glycero-3-phosphate + CTP + H(+) = 1-octadecanoyl-2-(5Z,8Z,11Z,14Z-eicosatetraenoyl)-sn-glycero-3-cytidine-5'-diphosphate + diphosphate. It catalyses the reaction 1-octadecanoyl-2-(9Z,12Z-octadecadienoyl)-sn-glycero-3-phosphate + CTP + H(+) = 1-octadecanoyl-2-(9Z,12Z-octadecadienoyl)-sn-glycero-3-cytidine-5'-diphosphate + diphosphate. The catalysed reaction is 1-hexadecanoyl-2-(5Z,8Z,11Z,14Z-eicosatetraenoyl)-sn-glycero-3-phosphate + CTP + H(+) = 1-hexadecanoyl-2-(5Z,8Z,11Z,14Z-eicosatetraenoyl)-sn-glycero-3-cytidine-5'-diphosphate + diphosphate. The enzyme catalyses 1,2-di-(5Z,8Z,11Z,14Z)-eicosatetraenoyl-sn-glycero-3-phosphate + CTP + H(+) = 1,2-di-(5Z,8Z,11Z,14Z-eicosatetraenoyl)-sn-glycero-3-cytidine-5'-diphosphate + diphosphate. It carries out the reaction 1-octadecanoyl-2-(9Z-octadecenoyl)-sn-glycero-3-phosphate + CTP + H(+) = 1-octadecanoyl-2-(9Z-octadecenoyl)-sn-glycero-3-cytidine-5'-diphosphate + diphosphate. It catalyses the reaction 1-octadecanoyl-2-(4Z,7Z,10Z,13Z,16Z,19Z-docosahexaenoyl)-sn-glycero-3-phosphate + CTP + H(+) = 1-octadecanoyl-2-(4Z,7Z,10Z,13Z,16Z,19Z-docosahexaenoyl)-sn-glycero-3-cytidine-5'-diphosphate + diphosphate. The catalysed reaction is 1,2-di-(9Z,12Z-octadecadienoyl)-sn-glycero-3-phosphate + CTP + H(+) = 1,2-di-(9Z,12Z-octadecadienoyl)-sn-glycero-3-cytidine-5'-diphosphate + diphosphate. The enzyme catalyses 1,2-di-(9Z-octadecenoyl)-sn-glycero-3-phosphate + CTP + H(+) = 1,2-di-(9Z-octadecenoyl)-sn-glycero-3-cytidine-5'-diphosphate + diphosphate. It functions in the pathway phospholipid metabolism; CDP-diacylglycerol biosynthesis; CDP-diacylglycerol from sn-glycerol 3-phosphate: step 3/3. Its function is as follows. Catalyzes the conversion of phosphatidic acid (PA) to CDP-diacylglycerol (CDP-DAG), an essential intermediate in the synthesis of phosphatidylglycerol, cardiolipin and phosphatidylinositol. Exhibits almost no acyl chain preference for PA, showing no discrimination for the sn-1/sn-2 acyl chain composition of PAs. Plays an important role in regulating the growth of lipid droplets which are storage organelles at the center of lipid and energy homeostasis. Positively regulates the differentiation and development of adipocytes. The protein is Phosphatidate cytidylyltransferase 1 of Mus musculus (Mouse).